The chain runs to 43 residues: Potassium channel toxin gamma-KTx 4.2 (43 aa).

Disulfide bonds link cysteine 5/cysteine 23, cysteine 11/cysteine 34, cysteine 20/cysteine 39, and cysteine 24/cysteine 41.

It belongs to the ergtoxin family. Gamma-KTx 4 subfamily. In terms of tissue distribution, expressed by the venom gland.

It localises to the secreted. Its function is as follows. Reversibly blocks Kv11/ERG potassium channels. The chain is Potassium channel toxin gamma-KTx 4.2 from Centruroides noxius (Mexican scorpion).